The primary structure comprises 249 residues: Cysteine-rich secretory protein 1 (249 aa).

The first 20 residues, 1-20 (MEIKHLLFLVAAACLLPVLS), serve as a signal peptide directing secretion. The SCP domain occupies 45-175 (VNIHNTLRRG…SPRYFYVCHY (131 aa)). Asparagine 104 is a glycosylation site (N-linked (GlcNAc...) asparagine). Intrachain disulfides connect cysteine 195–cysteine 202, cysteine 198–cysteine 207, cysteine 211–cysteine 244, cysteine 220–cysteine 238, and cysteine 229–cysteine 242. The region spanning 211-244 (CIYYDEYTDCSLEVRFLGCNHSTPRMFCKATCLC) is the ShKT domain. Asparagine 230 carries an N-linked (GlcNAc...) asparagine glycan.

This sequence belongs to the CRISP family. In terms of tissue distribution, expressed in all the regions of the epididymis except the caput and is not detected in the testis, prostate, seminal vesicle, and brain.

In terms of biological role, may have a role in sperm-egg fusion and maturation. The protein is Cysteine-rich secretory protein 1 (CRISP1) of Macaca mulatta (Rhesus macaque).